Here is a 663-residue protein sequence, read N- to C-terminus: DNA ligase (663 aa).

NAD(+) is bound by residues 34-38 (DYEYD), 83-84 (SL), and Glu-114. Catalysis depends on Lys-116, which acts as the N6-AMP-lysine intermediate. Residues Arg-137, Glu-171, Lys-286, and Lys-310 each coordinate NAD(+). Cys-404, Cys-407, Cys-422, and Cys-427 together coordinate Zn(2+). One can recognise a BRCT domain in the interval 585 to 663 (TVESPLTGKN…ADEFIKLANG (79 aa)).

It belongs to the NAD-dependent DNA ligase family. LigA subfamily. Mg(2+) is required as a cofactor. Mn(2+) serves as cofactor.

It carries out the reaction NAD(+) + (deoxyribonucleotide)n-3'-hydroxyl + 5'-phospho-(deoxyribonucleotide)m = (deoxyribonucleotide)n+m + AMP + beta-nicotinamide D-nucleotide.. DNA ligase that catalyzes the formation of phosphodiester linkages between 5'-phosphoryl and 3'-hydroxyl groups in double-stranded DNA using NAD as a coenzyme and as the energy source for the reaction. It is essential for DNA replication and repair of damaged DNA. This Brachyspira hyodysenteriae (strain ATCC 49526 / WA1) protein is DNA ligase.